The primary structure comprises 205 residues: Quinone-oxidoreductase QR2 (205 aa).

A Flavodoxin-like domain is found at 5-192; sequence VYIVYYSTYG…LKQAFHQGMY (188 aa). FMN contacts are provided by residues 11–15, 112–165, and His136; these read STYGH and IFFS…SPYG. Tyr13 contributes to the NAD(+) binding site.

It belongs to the WrbA family. FMN is required as a cofactor.

The catalysed reaction is a quinone + NADH + H(+) = a quinol + NAD(+). The enzyme catalyses a quinone + NADPH + H(+) = a quinol + NADP(+). With respect to regulation, inhibited by dicumarol. NAD(P)H:quinone oxidoreductase reducing quinones by a two-electron transfer mechanism. Can use either NADPH or NADH as electron donor. Can use menadione, 5-hydroxy-1,4-naphthoquinone (juglone) and 2,6-dimethoxy-p-benzoquinone (DMBQ) as substrates. Mitigates the toxicity of exogenous quinones in the rhizosphere. The chain is Quinone-oxidoreductase QR2 from Triphysaria versicolor (Yellow owl's clover).